The sequence spans 767 residues: Lysyl oxidase homolog 2 (767 aa).

An N-terminal signal peptide occupies residues 1–19 (MLVTHIFLLTLSLSVPTLG). 4 SRCR domains span residues 51–152 (VRLA…VQCS), 181–295 (IRAI…VSCT), 319–418 (VRLR…VRCN), and 428–537 (VRLS…VSCV). Intrachain disulfides connect cysteine 77-cysteine 141, cysteine 90-cysteine 151, cysteine 121-cysteine 131, cysteine 211-cysteine 284, cysteine 224-cysteine 294, cysteine 258-cysteine 268, cysteine 344-cysteine 407, cysteine 357-cysteine 417, and cysteine 388-cysteine 398. Residue asparagine 281 is glycosylated (N-linked (GlcNAc...) asparagine). Asparagine 448 carries an N-linked (GlcNAc...) asparagine glycan. Cystine bridges form between cysteine 457–cysteine 523, cysteine 470–cysteine 536, and cysteine 504–cysteine 514. The segment at 541–744 (PDLVLNAALV…WMYNCHIGGS (204 aa)) is lysyl-oxidase like. Aspartate 542 and leucine 543 together coordinate Ca(2+). 4 disulfide bridges follow: cysteine 566–cysteine 618, cysteine 572–cysteine 688, cysteine 650–cysteine 666, and cysteine 656–cysteine 678. Cu cation is bound by residues histidine 619, histidine 621, and histidine 623. N-linked (GlcNAc...) asparagine glycosylation is present at asparagine 637. A cross-link (lysine tyrosylquinone (Lys-Tyr)) is located at residues 646–682 (KASFCLEDSECETDVQKQYACANFGEQGITVGCWDVY). Tyrosine 682 is modified (2',4',5'-topaquinone). Residues glutamate 715, aspartate 717, asparagine 720, and asparagine 721 each contribute to the Ca(2+) site. Cysteine 725 and cysteine 739 are joined by a disulfide.

Belongs to the lysyl oxidase family. Requires Cu cation as cofactor. Lysine tyrosylquinone residue is required as a cofactor. The lysine tyrosylquinone cross-link (LTQ) is generated by condensation of the epsilon-amino group of a lysine with a topaquinone produced by oxidation of tyrosine.

The protein resides in the secreted. Its subcellular location is the extracellular space. The protein localises to the extracellular matrix. It localises to the basement membrane. It is found in the nucleus. The protein resides in the chromosome. Its subcellular location is the endoplasmic reticulum. The enzyme catalyses L-lysyl-[protein] + O2 + H2O = (S)-2-amino-6-oxohexanoyl-[protein] + H2O2 + NH4(+). In terms of biological role, mediates the post-translational oxidative deamination of lysine residues on target proteins leading to the formation of deaminated lysine (allysine). Acts as a transcription corepressor and specifically mediates deamination of trimethylated 'Lys-4' of histone H3 (H3K4me3), a specific tag for epigenetic transcriptional activation. Shows no activity against histone H3 when it is trimethylated on 'Lys-9' (H3K9me3) or 'Lys-27' (H3K27me3) or when 'Lys-4' is monomethylated (H3K4me1) or dimethylated (H3K4me2). Also mediates deamination of methylated TAF10, a member of the transcription factor IID (TFIID) complex, which induces release of TAF10 from promoters, leading to inhibition of TFIID-dependent transcription. LOXL2-mediated deamination of TAF10 results in transcriptional repression of genes required for embryonic stem cell pluripotency. Involved in epithelial to mesenchymal transition (EMT) and participates in repression of E-cadherin, probably by mediating deamination of histone H3. When secreted into the extracellular matrix, promotes cross-linking of extracellular matrix proteins by mediating oxidative deamination of peptidyl lysine residues in precursors to fibrous collagen and elastin. Acts as a regulator of sprouting angiogenesis, probably via collagen IV scaffolding. Acts as a regulator of chondrocyte differentiation, probably by regulating expression of factors that control chondrocyte differentiation. In Xenopus tropicalis (Western clawed frog), this protein is Lysyl oxidase homolog 2 (loxl2).